The primary structure comprises 392 residues: Chorismate synthase (392 aa).

Arginine 39 and arginine 45 together coordinate NADP(+). Residues 128–130 (RSS), 248–249 (QA), glycine 300, 315–319 (KPIPT), and arginine 341 contribute to the FMN site.

Belongs to the chorismate synthase family. As to quaternary structure, homotetramer. FMNH2 is required as a cofactor.

The enzyme catalyses 5-O-(1-carboxyvinyl)-3-phosphoshikimate = chorismate + phosphate. Its pathway is metabolic intermediate biosynthesis; chorismate biosynthesis; chorismate from D-erythrose 4-phosphate and phosphoenolpyruvate: step 7/7. Catalyzes the anti-1,4-elimination of the C-3 phosphate and the C-6 proR hydrogen from 5-enolpyruvylshikimate-3-phosphate (EPSP) to yield chorismate, which is the branch point compound that serves as the starting substrate for the three terminal pathways of aromatic amino acid biosynthesis. This reaction introduces a second double bond into the aromatic ring system. This is Chorismate synthase from Trichlorobacter lovleyi (strain ATCC BAA-1151 / DSM 17278 / SZ) (Geobacter lovleyi).